A 342-amino-acid polypeptide reads, in one-letter code: Ketol-acid reductoisomerase (NADP(+)) (342 aa).

A KARI N-terminal Rossmann domain is found at 2-182 (AEMFYDDDAD…GGLRAGGIKT (181 aa)). NADP(+)-binding positions include 25–28 (FGSQ), Lys-48, Ser-51, Ser-53, and 83–86 (DHLQ). The active site involves His-108. Gly-134 contributes to the NADP(+) binding site. The 146-residue stretch at 183–328 (TFTEETETDL…RELRKLMAWV (146 aa)) folds into the KARI C-terminal knotted domain. Positions 191, 195, 227, and 231 each coordinate Mg(2+). Ser-252 contacts substrate.

Belongs to the ketol-acid reductoisomerase family. Mg(2+) serves as cofactor.

The catalysed reaction is (2R)-2,3-dihydroxy-3-methylbutanoate + NADP(+) = (2S)-2-acetolactate + NADPH + H(+). It catalyses the reaction (2R,3R)-2,3-dihydroxy-3-methylpentanoate + NADP(+) = (S)-2-ethyl-2-hydroxy-3-oxobutanoate + NADPH + H(+). The protein operates within amino-acid biosynthesis; L-isoleucine biosynthesis; L-isoleucine from 2-oxobutanoate: step 2/4. Its pathway is amino-acid biosynthesis; L-valine biosynthesis; L-valine from pyruvate: step 2/4. Involved in the biosynthesis of branched-chain amino acids (BCAA). Catalyzes an alkyl-migration followed by a ketol-acid reduction of (S)-2-acetolactate (S2AL) to yield (R)-2,3-dihydroxy-isovalerate. In the isomerase reaction, S2AL is rearranged via a Mg-dependent methyl migration to produce 3-hydroxy-3-methyl-2-ketobutyrate (HMKB). In the reductase reaction, this 2-ketoacid undergoes a metal-dependent reduction by NADPH to yield (R)-2,3-dihydroxy-isovalerate. The chain is Ketol-acid reductoisomerase (NADP(+)) from Kineococcus radiotolerans (strain ATCC BAA-149 / DSM 14245 / SRS30216).